A 151-amino-acid chain; its full sequence is Putative pre-16S rRNA nuclease (151 aa).

This sequence belongs to the YqgF nuclease family.

The protein resides in the cytoplasm. Could be a nuclease involved in processing of the 5'-end of pre-16S rRNA. This Gloeothece citriformis (strain PCC 7424) (Cyanothece sp. (strain PCC 7424)) protein is Putative pre-16S rRNA nuclease.